The primary structure comprises 233 residues: DNA repair protein RecO (233 aa).

Belongs to the RecO family.

Functionally, involved in DNA repair and RecF pathway recombination. The polypeptide is DNA repair protein RecO (Psychromonas ingrahamii (strain DSM 17664 / CCUG 51855 / 37)).